Here is a 490-residue protein sequence, read N- to C-terminus: Betaine aldehyde dehydrogenase (490 aa).

Residues I27 and D93 each contribute to the K(+) site. 150–152 (GAW) is a binding site for NAD(+). The active-site Charge relay system is the K162. An NAD(+)-binding site is contributed by 176–179 (KPSE). V180 contacts K(+). Position 230–233 (230–233 (GTDT)) interacts with NAD(+). L246 contributes to the K(+) binding site. The Proton acceptor role is filled by E252. NAD(+)-binding residues include G254, C286, and E387. Residue C286 is the Nucleophile of the active site. Position 286 is a cysteine sulfenic acid (-SOH) (C286). 2 residues coordinate K(+): K457 and G460. Residue E464 is the Charge relay system of the active site.

This sequence belongs to the aldehyde dehydrogenase family. In terms of assembly, dimer of dimers. K(+) is required as a cofactor.

It catalyses the reaction betaine aldehyde + NAD(+) + H2O = glycine betaine + NADH + 2 H(+). It participates in amine and polyamine biosynthesis; betaine biosynthesis via choline pathway; betaine from betaine aldehyde: step 1/1. In terms of biological role, involved in the biosynthesis of the osmoprotectant glycine betaine. Catalyzes the irreversible oxidation of betaine aldehyde to the corresponding acid. The sequence is that of Betaine aldehyde dehydrogenase from Pseudomonas fluorescens (strain ATCC BAA-477 / NRRL B-23932 / Pf-5).